The chain runs to 428 residues: Trigger factor (428 aa).

In terms of domain architecture, PPIase FKBP-type spans 163 to 248; it reads GDIVDIDFEG…VNDVKVKELP (86 aa).

It belongs to the FKBP-type PPIase family. Tig subfamily.

It localises to the cytoplasm. The enzyme catalyses [protein]-peptidylproline (omega=180) = [protein]-peptidylproline (omega=0). Involved in protein export. Acts as a chaperone by maintaining the newly synthesized protein in an open conformation. Functions as a peptidyl-prolyl cis-trans isomerase. The chain is Trigger factor from Acetivibrio thermocellus (strain ATCC 27405 / DSM 1237 / JCM 9322 / NBRC 103400 / NCIMB 10682 / NRRL B-4536 / VPI 7372) (Clostridium thermocellum).